We begin with the raw amino-acid sequence, 501 residues long: Proline--tRNA ligase (501 aa).

Belongs to the class-II aminoacyl-tRNA synthetase family.

The catalysed reaction is tRNA(Pro) + L-proline + ATP = L-prolyl-tRNA(Pro) + AMP + diphosphate. The polypeptide is Proline--tRNA ligase (Encephalitozoon cuniculi (strain GB-M1) (Microsporidian parasite)).